A 141-amino-acid polypeptide reads, in one-letter code: Large ribosomal subunit protein uL11 (141 aa).

It belongs to the universal ribosomal protein uL11 family. In terms of assembly, part of the ribosomal stalk of the 50S ribosomal subunit. Interacts with L10 and the large rRNA to form the base of the stalk. L10 forms an elongated spine to which L12 dimers bind in a sequential fashion forming a multimeric L10(L12)X complex. In terms of processing, one or more lysine residues are methylated.

In terms of biological role, forms part of the ribosomal stalk which helps the ribosome interact with GTP-bound translation factors. The chain is Large ribosomal subunit protein uL11 from Streptococcus gordonii (strain Challis / ATCC 35105 / BCRC 15272 / CH1 / DL1 / V288).